Reading from the N-terminus, the 237-residue chain is Listeriolysin regulatory protein (237 aa).

Residues 137–212 (NGKLGSICGQ…NSCFYVQNLD (76 aa)) enclose the HTH crp-type domain.

Positively regulates expression of listeriolysin, of 1-phosphadidylinositol phosphodiesterase (PI-PLC) and other virulence factors. This chain is Listeriolysin regulatory protein (prfA), found in Listeria monocytogenes serovar 1/2a (strain ATCC BAA-679 / EGD-e).